The primary structure comprises 360 residues: Homoserine O-succinyltransferase (360 aa).

Cysteine 146 (acyl-thioester intermediate) is an active-site residue. Substrate contacts are provided by lysine 167 and serine 196. The active-site Proton acceptor is the histidine 239. Glutamate 241 is a catalytic residue. Arginine 253 lines the substrate pocket.

This sequence belongs to the MetA family.

It localises to the cytoplasm. The catalysed reaction is L-homoserine + succinyl-CoA = O-succinyl-L-homoserine + CoA. The protein operates within amino-acid biosynthesis; L-methionine biosynthesis via de novo pathway; O-succinyl-L-homoserine from L-homoserine: step 1/1. In terms of biological role, transfers a succinyl group from succinyl-CoA to L-homoserine, forming succinyl-L-homoserine. In vitro, can also use glutaryl-CoA as acyl donor. The chain is Homoserine O-succinyltransferase from Thiothrix nivea (strain ATCC 35100 / DSM 5205 / JP2).